The primary structure comprises 261 residues: Ribonuclease HII (261 aa).

The RNase H type-2 domain occupies 72-260 (AVICGIDEVG…IKSIVLEKLD (189 aa)). Residues Asp-78, Glu-79, and Asp-170 each contribute to the a divalent metal cation site.

It belongs to the RNase HII family. Requires Mn(2+) as cofactor. It depends on Mg(2+) as a cofactor.

It is found in the cytoplasm. It carries out the reaction Endonucleolytic cleavage to 5'-phosphomonoester.. Endonuclease that specifically degrades the RNA of RNA-DNA hybrids. This Staphylococcus carnosus (strain TM300) protein is Ribonuclease HII.